A 284-amino-acid chain; its full sequence is RNase adapter protein RapZ (284 aa).

8-15 (GRSGSGKS) lines the ATP pocket. GTP is bound at residue 56-59 (DVRN). The tract at residues 266–284 (RSRGKNVQSRHRTLEKRKT) is RNA-binding.

The protein belongs to the RapZ-like family. RapZ subfamily. Homotrimer.

Functionally, modulates the synthesis of GlmS, by affecting the processing and stability of the regulatory small RNA GlmZ. When glucosamine-6-phosphate (GlcN6P) concentrations are high in the cell, RapZ binds GlmZ and targets it to cleavage by RNase E. Consequently, GlmZ is inactivated and unable to activate GlmS synthesis. Under low GlcN6P concentrations, RapZ is sequestered and inactivated by an other regulatory small RNA, GlmY, preventing GlmZ degradation and leading to synthesis of GlmS. This Salmonella arizonae (strain ATCC BAA-731 / CDC346-86 / RSK2980) protein is RNase adapter protein RapZ.